The sequence spans 349 residues: Dihydroorotate dehydrogenase (quinone) (349 aa).

FMN-binding positions include 59–63 (PGFDK) and Thr83. Lys63 serves as a coordination point for substrate. A substrate-binding site is contributed by 108 to 112 (NRMGF). FMN-binding residues include Asn142 and Asn173. Residue Asn173 participates in substrate binding. The Nucleophile role is filled by Ser176. Asn178 lines the substrate pocket. Positions 212 and 240 each coordinate FMN. 241–242 (NT) contributes to the substrate binding site. FMN contacts are provided by residues Gly262, Gly291, and 312-313 (YS).

Belongs to the dihydroorotate dehydrogenase family. Type 2 subfamily. As to quaternary structure, monomer. It depends on FMN as a cofactor.

It localises to the cell membrane. The enzyme catalyses (S)-dihydroorotate + a quinone = orotate + a quinol. It participates in pyrimidine metabolism; UMP biosynthesis via de novo pathway; orotate from (S)-dihydroorotate (quinone route): step 1/1. Functionally, catalyzes the conversion of dihydroorotate to orotate with quinone as electron acceptor. The polypeptide is Dihydroorotate dehydrogenase (quinone) (Novosphingobium aromaticivorans (strain ATCC 700278 / DSM 12444 / CCUG 56034 / CIP 105152 / NBRC 16084 / F199)).